Reading from the N-terminus, the 58-residue chain is Small ribosomal subunit protein bS21A (58 aa).

The interval 38–58 (YEKPSLRRKRKAEAARKGGRN) is disordered. Residues 49-58 (AEAARKGGRN) are compositionally biased toward basic and acidic residues.

The protein belongs to the bacterial ribosomal protein bS21 family.

The protein is Small ribosomal subunit protein bS21A of Trichormus variabilis (strain ATCC 29413 / PCC 7937) (Anabaena variabilis).